The sequence spans 624 residues: Probable potassium transport system protein Kup (624 aa).

The next 12 helical transmembrane spans lie at 13-33 (LALG…LYTM), 52-72 (ILSL…VLVI), 102-122 (WIIM…SLIT), 139-159 (PALH…LFAI), 170-190 (LFGP…AIGI), 208-228 (FFMT…LAIT), 249-269 (WFGF…ALLL), 291-311 (MVAL…SGAF), 339-359 (IYIP…VLGF), 368-388 (AYGI…ALLM), 399-419 (TLVA…ANAV), and 421-441 (IPEG…ILVT).

It belongs to the HAK/KUP transporter (TC 2.A.72) family.

It is found in the cell inner membrane. It catalyses the reaction K(+)(in) + H(+)(in) = K(+)(out) + H(+)(out). Functionally, transport of potassium into the cell. Likely operates as a K(+):H(+) symporter. The sequence is that of Probable potassium transport system protein Kup from Thiobacillus denitrificans (strain ATCC 25259 / T1).